The following is a 776-amino-acid chain: MTTIHTLGYPRIGAQRELKFALESFWKGASSEDDLRATGSALRARHWAAQRDAGLDFVTVGDFAWYDQVQQTAALLGAVPTRYGFDPAQLTLAQSFVLARGNADHAAMEMTKWFDTNYHYLVPELTPDLLDRQWGPGTEWLFDEVREAQALGHRVKVVLLGPITFLHLAKARHGLADKLALLPQVLQAYTAVLQRLAALKVEWVQIDEPALVLDLPQAWVDAFGPAHQALAAAKGPKRLLATYFEAASHHAALIQSLPVDGVHLDLVRAPDQVAAFAPWSADKVLSVGVVDGRNIWRTDLTRVLAHLTPLAQALGDRLWIAPSCSLLHVPVDLSAETKLDDELKGWLAFARQKLDELAVIKRALVEGPAAVQGELDDNRIAIASRTQSRRVHNAGVKKRVAAIRAADAVRAAPYPARADAQQARLNLPLLPTTTIGSFPQTPEIRRARAQHKRGDLPALDYLQRMRTEIADVVRRQEALGLDMLVHGEAERNDMVEYFGELLWGYAFTANGWVQSYGSRCVKPPVIYGDVYRPEAMTVEWSKYAQSLTSKPMKGMLTGPVTMLQWSFVRDDQPREQTALQIALALRDEVCDLEAAGIAAIQIDEPAFREGLPLRASDVPTYLEWAARAFRVSASGVRNDTQIHTHMCYSEFNDILPAIASMDADVITIETSRSNMELLDAFAEFAYPNEIGPGVYDIHSPRVPRVDEMESLLDKAAQVVPVQRLWVNPDCGLKTRGWPEVEAALQGIVEATHRLRAKHANAKRAGSKAAHVEGEMA.

5-methyltetrahydropteroyltri-L-glutamate contacts are provided by residues 16 to 19 and Lys-112; that span reads RELK. L-homocysteine is bound by residues 435 to 437 and Glu-488; that span reads IGS. L-methionine is bound by residues 435-437 and Glu-488; that span reads IGS. Residues 519 to 520 and Trp-565 contribute to the 5-methyltetrahydropteroyltri-L-glutamate site; that span reads RC. Asp-603 contributes to the L-homocysteine binding site. L-methionine is bound at residue Asp-603. Glu-609 contacts 5-methyltetrahydropteroyltri-L-glutamate. The Zn(2+) site is built by His-645, Cys-647, and Glu-669. Catalysis depends on His-698, which acts as the Proton donor. Cys-730 is a Zn(2+) binding site.

The protein belongs to the vitamin-B12 independent methionine synthase family. Requires Zn(2+) as cofactor.

The catalysed reaction is 5-methyltetrahydropteroyltri-L-glutamate + L-homocysteine = tetrahydropteroyltri-L-glutamate + L-methionine. Its pathway is amino-acid biosynthesis; L-methionine biosynthesis via de novo pathway; L-methionine from L-homocysteine (MetE route): step 1/1. Functionally, catalyzes the transfer of a methyl group from 5-methyltetrahydrofolate to homocysteine resulting in methionine formation. This Ralstonia pickettii (strain 12J) protein is 5-methyltetrahydropteroyltriglutamate--homocysteine methyltransferase.